The primary structure comprises 232 residues: Ubiquitin carboxyl-terminal hydrolase UCHL3 (232 aa).

The UCH catalytic domain occupies 6–225 (IWTPLESNPD…LRFSALAVIP (220 aa)). Residues 10–14 (LESNP) form an interaction with ubiquitin region. Cys-92 (nucleophile) is an active-site residue. The tract at residues 151–159 (QVENRDDIL) is crossover loop which restricts access of large ubiquitin adducts to the active site. An interaction with ubiquitin region spans residues 163–165 (THF). His-164 serves as the catalytic Proton donor.

This sequence belongs to the peptidase C12 family.

It catalyses the reaction Thiol-dependent hydrolysis of ester, thioester, amide, peptide and isopeptide bonds formed by the C-terminal Gly of ubiquitin (a 76-residue protein attached to proteins as an intracellular targeting signal).. Thiol protease that recognizes and hydrolyzes a peptide bond at the C-terminal glycine of either ubiquitin or NEDD8. Essential for parasite blood stage survival. The protein is Ubiquitin carboxyl-terminal hydrolase UCHL3 of Plasmodium falciparum (isolate 3D7).